Consider the following 433-residue polypeptide: Serine hydroxymethyltransferase (433 aa).

A (6S)-5,6,7,8-tetrahydrofolate-binding site is contributed by 121–123; that stretch reads AHV. At K227 the chain carries N6-(pyridoxal phosphate)lysine. E243 provides a ligand contact to (6S)-5,6,7,8-tetrahydrofolate.

This sequence belongs to the SHMT family. Homodimer. Requires pyridoxal 5'-phosphate as cofactor.

Its subcellular location is the cytoplasm. The protein operates within amino-acid biosynthesis; glycine biosynthesis; glycine from L-serine: step 1/1. Functionally, catalyzes the reversible interconversion of serine and glycine with a modified folate serving as the one-carbon carrier. Also exhibits a pteridine-independent aldolase activity toward beta-hydroxyamino acids, producing glycine and aldehydes, via a retro-aldol mechanism. The sequence is that of Serine hydroxymethyltransferase from Saccharolobus islandicus (strain M.14.25 / Kamchatka #1) (Sulfolobus islandicus).